Reading from the N-terminus, the 807-residue chain is Phenylalanine--tRNA ligase beta subunit (807 aa).

Positions 39–153 (SARAQGVVVG…SLPPNGSPVA (115 aa)) constitute a tRNA-binding domain. In terms of domain architecture, B5 spans 407-491 (AEAGPVLLRR…RLVGFDRFGA (85 aa)). Residues Asp469, Asp475, Glu478, and Glu479 each contribute to the Mg(2+) site. Residues 713 to 806 (PTVPFSERDL…LSKQFQAELR (94 aa)) enclose the FDX-ACB domain.

Belongs to the phenylalanyl-tRNA synthetase beta subunit family. Type 1 subfamily. In terms of assembly, tetramer of two alpha and two beta subunits. Requires Mg(2+) as cofactor.

The protein localises to the cytoplasm. The enzyme catalyses tRNA(Phe) + L-phenylalanine + ATP = L-phenylalanyl-tRNA(Phe) + AMP + diphosphate + H(+). This is Phenylalanine--tRNA ligase beta subunit from Synechococcus sp. (strain CC9605).